The sequence spans 349 residues: Glycosyltransferase 8 domain-containing protein 2 (349 aa).

Residues 1 to 6 (MAFLRK) are Cytoplasmic-facing. The chain crosses the membrane as a helical; Signal-anchor for type II membrane protein span at residues 7–24 (VNQVLLLLLVLTLCGILY). Over 25–349 (KKVHKGAVLK…AGIFKLHHNR (325 aa)) the chain is Lumenal. Residue N234 is glycosylated (N-linked (GlcNAc...) asparagine).

The protein belongs to the glycosyltransferase 8 family.

Its subcellular location is the membrane. The sequence is that of Glycosyltransferase 8 domain-containing protein 2 (Glt8d2) from Mus musculus (Mouse).